We begin with the raw amino-acid sequence, 213 residues long: Kynurenine formamidase (213 aa).

Residue tryptophan 18 participates in substrate binding. Zn(2+) is bound by residues histidine 48, histidine 52, and aspartate 54. The Proton donor/acceptor role is filled by histidine 58. Zn(2+)-binding residues include histidine 160 and glutamate 172.

Belongs to the Cyclase 1 superfamily. KynB family. In terms of assembly, homodimer. Zn(2+) serves as cofactor.

The enzyme catalyses N-formyl-L-kynurenine + H2O = L-kynurenine + formate + H(+). Its pathway is amino-acid degradation; L-tryptophan degradation via kynurenine pathway; L-kynurenine from L-tryptophan: step 2/2. Catalyzes the hydrolysis of N-formyl-L-kynurenine to L-kynurenine, the second step in the kynurenine pathway of tryptophan degradation. This is Kynurenine formamidase from Burkholderia cenocepacia (strain HI2424).